We begin with the raw amino-acid sequence, 378 residues long: Succinyl-diaminopimelate desuccinylase (378 aa).

Residue His67 participates in Zn(2+) binding. Asp69 is a catalytic residue. Position 100 (Asp100) interacts with Zn(2+). Glu134 acts as the Proton acceptor in catalysis. Glu135, Glu163, and His349 together coordinate Zn(2+).

The protein belongs to the peptidase M20A family. DapE subfamily. Homodimer. It depends on Zn(2+) as a cofactor. Co(2+) serves as cofactor.

The enzyme catalyses N-succinyl-(2S,6S)-2,6-diaminopimelate + H2O = (2S,6S)-2,6-diaminopimelate + succinate. It participates in amino-acid biosynthesis; L-lysine biosynthesis via DAP pathway; LL-2,6-diaminopimelate from (S)-tetrahydrodipicolinate (succinylase route): step 3/3. In terms of biological role, catalyzes the hydrolysis of N-succinyl-L,L-diaminopimelic acid (SDAP), forming succinate and LL-2,6-diaminopimelate (DAP), an intermediate involved in the bacterial biosynthesis of lysine and meso-diaminopimelic acid, an essential component of bacterial cell walls. This Nitrosospira multiformis (strain ATCC 25196 / NCIMB 11849 / C 71) protein is Succinyl-diaminopimelate desuccinylase.